Consider the following 50-residue polypeptide: Protein hunchback (50 aa).

C2H2-type zinc fingers lie at residues 1–5 (HILKH), 11–33 (IRCPECNYTCVNRSMLTSHMKSH), and 39–50 (YRCLDCNYATKY).

This sequence belongs to the hunchback C2H2-type zinc-finger protein family.

It localises to the nucleus. Its function is as follows. Gap class segmentation protein that controls development of head structures. The protein is Protein hunchback (hb) of Bradysia coprophila (Dark-winged fungus gnat).